A 178-amino-acid polypeptide reads, in one-letter code: MGDPRRLGKKYDTPNHPWIGERIQSEKEISQKYGLVNKKELWKMETQLRNYRRQARKLISDTTTQGGKEAVQLFNVLKRYAILVESEPTLDHVLSLNIESILERRLQTIVYRKGLAKTAKQARQFIVHGHIAVNGKRVTAPAYLVSVAENDAIEYVPNSPMASENHPERTAAVSEENQ.

Residues 104-166 (RRLQTIVYRK…PNSPMASENH (63 aa)) form the S4 RNA-binding domain. Positions 158 to 178 (NSPMASENHPERTAAVSEENQ) are disordered.

The protein belongs to the universal ribosomal protein uS4 family. In terms of assembly, part of the 30S ribosomal subunit. Contacts protein S5. The interaction surface between S4 and S5 is involved in control of translational fidelity.

Functionally, one of the primary rRNA binding proteins, it binds directly to 16S rRNA where it nucleates assembly of the body of the 30S subunit. With S5 and S12 plays an important role in translational accuracy. The polypeptide is Small ribosomal subunit protein uS4 (Methanococcus maripaludis (strain C5 / ATCC BAA-1333)).